We begin with the raw amino-acid sequence, 123 residues long: Ribosome-binding factor A (123 aa).

Belongs to the RbfA family. In terms of assembly, monomer. Binds 30S ribosomal subunits, but not 50S ribosomal subunits or 70S ribosomes.

It localises to the cytoplasm. One of several proteins that assist in the late maturation steps of the functional core of the 30S ribosomal subunit. Associates with free 30S ribosomal subunits (but not with 30S subunits that are part of 70S ribosomes or polysomes). Required for efficient processing of 16S rRNA. May interact with the 5'-terminal helix region of 16S rRNA. The polypeptide is Ribosome-binding factor A (Acetivibrio thermocellus (strain ATCC 27405 / DSM 1237 / JCM 9322 / NBRC 103400 / NCIMB 10682 / NRRL B-4536 / VPI 7372) (Clostridium thermocellum)).